We begin with the raw amino-acid sequence, 83 residues long: Small ribosomal subunit protein bS20 (83 aa).

Belongs to the bacterial ribosomal protein bS20 family.

Functionally, binds directly to 16S ribosomal RNA. This is Small ribosomal subunit protein bS20 from Lactobacillus delbrueckii subsp. bulgaricus (strain ATCC 11842 / DSM 20081 / BCRC 10696 / JCM 1002 / NBRC 13953 / NCIMB 11778 / NCTC 12712 / WDCM 00102 / Lb 14).